The primary structure comprises 277 residues: Large ribosomal subunit protein uL2 (277 aa).

2 disordered regions span residues 28–55 (EPEKSLTHHKHSKQGRNNRGVVTSRHRG) and 207–277 (KAGR…RTQG). Composition is skewed to basic residues over residues 34–43 (THHKHSKQGR), 209–220 (GRTRHRGQRPHV), and 255–265 (LGRKTRNKKKR).

This sequence belongs to the universal ribosomal protein uL2 family. In terms of assembly, part of the 50S ribosomal subunit. Forms a bridge to the 30S subunit in the 70S ribosome.

Its function is as follows. One of the primary rRNA binding proteins. Required for association of the 30S and 50S subunits to form the 70S ribosome, for tRNA binding and peptide bond formation. It has been suggested to have peptidyltransferase activity; this is somewhat controversial. Makes several contacts with the 16S rRNA in the 70S ribosome. This Microcystis aeruginosa (strain NIES-843 / IAM M-2473) protein is Large ribosomal subunit protein uL2.